Reading from the N-terminus, the 142-residue chain is UPF0306 protein Ent638_3591 (142 aa).

It belongs to the UPF0306 family.

The sequence is that of UPF0306 protein Ent638_3591 from Enterobacter sp. (strain 638).